The sequence spans 298 residues: ATP synthase gamma chain (298 aa).

Belongs to the ATPase gamma chain family. In terms of assembly, F-type ATPases have 2 components, CF(1) - the catalytic core - and CF(0) - the membrane proton channel. CF(1) has five subunits: alpha(3), beta(3), gamma(1), delta(1), epsilon(1). CF(0) has three main subunits: a, b and c.

The protein resides in the cell inner membrane. Functionally, produces ATP from ADP in the presence of a proton gradient across the membrane. The gamma chain is believed to be important in regulating ATPase activity and the flow of protons through the CF(0) complex. This is ATP synthase gamma chain from Granulibacter bethesdensis (strain ATCC BAA-1260 / CGDNIH1).